A 185-amino-acid chain; its full sequence is MINVNEFRPGITFEFENEIYVVISAQHSKQGRGQANVKAKVKNLRTGAITIKTFSGGERVEKAHIEKISMSFLYNDGVSIVLMDDSTYEQVAIENTKITWELNFLTEGIKVKLRKFNNEILDIELPAKIELKITSTFDAVRGNTTTNPTKRATLETGYEIDVPLFIKEGESVIVSTEDGKYVSRA.

It belongs to the elongation factor P family.

It is found in the cytoplasm. The protein operates within protein biosynthesis; polypeptide chain elongation. Functionally, involved in peptide bond synthesis. Stimulates efficient translation and peptide-bond synthesis on native or reconstituted 70S ribosomes in vitro. Probably functions indirectly by altering the affinity of the ribosome for aminoacyl-tRNA, thus increasing their reactivity as acceptors for peptidyl transferase. This chain is Elongation factor P, found in Mesomycoplasma hyopneumoniae (strain 232) (Mycoplasma hyopneumoniae).